A 240-amino-acid polypeptide reads, in one-letter code: Tubulin alpha chain (240 aa).

Asn-17 contacts GTP. Residue Glu-43 is part of the active site.

It belongs to the tubulin family. Dimer of alpha and beta chains. A typical microtubule is a hollow water-filled tube with an outer diameter of 25 nm and an inner diameter of 15 nM. Alpha-beta heterodimers associate head-to-tail to form protofilaments running lengthwise along the microtubule wall with the beta-tubulin subunit facing the microtubule plus end conferring a structural polarity. Microtubules usually have 13 protofilaments but different protofilament numbers can be found in some organisms and specialized cells. Mg(2+) is required as a cofactor. Post-translationally, undergoes a tyrosination/detyrosination cycle, the cyclic removal and re-addition of a C-terminal tyrosine residue by the enzymes tubulin tyrosine carboxypeptidase (TTCP) and tubulin tyrosine ligase (TTL), respectively.

It is found in the cytoplasm. The protein resides in the cytoskeleton. The enzyme catalyses GTP + H2O = GDP + phosphate + H(+). Functionally, tubulin is the major constituent of microtubules, a cylinder consisting of laterally associated linear protofilaments composed of alpha- and beta-tubulin heterodimers. Microtubules grow by the addition of GTP-tubulin dimers to the microtubule end, where a stabilizing cap forms. Below the cap, tubulin dimers are in GDP-bound state, owing to GTPase activity of alpha-tubulin. The polypeptide is Tubulin alpha chain (Octopus vulgaris (Common octopus)).